The chain runs to 221 residues: Ribosomal RNA large subunit methyltransferase E (221 aa).

S-adenosyl-L-methionine contacts are provided by Gly72, Trp74, Asp91, Asp107, and Asp131. Residue Lys171 is the Proton acceptor of the active site.

Belongs to the class I-like SAM-binding methyltransferase superfamily. RNA methyltransferase RlmE family.

It localises to the cytoplasm. It catalyses the reaction uridine(2552) in 23S rRNA + S-adenosyl-L-methionine = 2'-O-methyluridine(2552) in 23S rRNA + S-adenosyl-L-homocysteine + H(+). Its function is as follows. Specifically methylates the uridine in position 2552 of 23S rRNA at the 2'-O position of the ribose in the fully assembled 50S ribosomal subunit. The sequence is that of Ribosomal RNA large subunit methyltransferase E from Zymomonas mobilis subsp. mobilis (strain ATCC 31821 / ZM4 / CP4).